The primary structure comprises 669 residues: RNA-binding protein 14 (669 aa).

2 RRM domains span residues 1 to 73 (MKIF…MSRP) and 79 to 149 (WKIF…LSTK). Residues lysine 126, lysine 135, lysine 138, lysine 149, and lysine 153 each participate in a glycyl lysine isopeptide (Lys-Gly) (interchain with G-Cter in SUMO2) cross-link. Disordered stretches follow at residues 147–175 (STKG…DTAF) and 193–232 (NSTG…PLTA). Residue serine 161 is modified to Phosphoserine. Lysine 164 is subject to N6-acetyllysine; alternate. A Glycyl lysine isopeptide (Lys-Gly) (interchain with G-Cter in SUMO2); alternate cross-link involves residue lysine 164. Residue threonine 206 is modified to Phosphothreonine. Phosphoserine occurs at positions 220, 242, 244, 256, 272, and 280. The tract at residues 284-303 (PYRGQLASPSSQSAAASSLG) is disordered. A compositionally biased stretch (low complexity) spans 287 to 303 (GQLASPSSQSAAASSLG). The TRBP-interacting domain; interaction with STIL stretch occupies residues 307–354 (GAQPSASALSSYGGQAAAASSLNSYGAQGSSLASYGNQPSSYGAQAAS). Serine 520, serine 523, serine 527, and serine 562 each carry phosphoserine. Residues 566–592 (VANANSTPPPYERTRLSPPRASYDDPY) form a disordered region. Threonine 572 carries the phosphothreonine modification. Serine 582 bears the Phosphoserine mark. A Glycyl lysine isopeptide (Lys-Gly) (interchain with G-Cter in SUMO2) cross-link involves residue lysine 600. Phosphoserine is present on residues serine 618, serine 620, serine 623, serine 627, serine 643, and serine 649.

In terms of assembly, interacts with NCOA6, CITED1 and XRCC5/KU86. Interacts with SS18. Interacts with STIL and interferes with its interaction with CPAP. Interacts with gamma-tubulin. Part of the HDP-RNP complex composed of at least HEXIM1, PRKDC, XRCC5, XRCC6, paraspeckle proteins (SFPQ, NONO, PSPC1, RBM14, and MATR3) and NEAT1 RNA.

It is found in the nucleus. The protein localises to the nucleolus. Its subcellular location is the cytoplasm. Functionally, may function as a nuclear receptor coactivator, enhancing transcription through other coactivators such as NCOA6 and CITED1. Regulates centriole biogenesis by suppressing the formation of aberrant centriolar protein complexes in the cytoplasm and thus preserving mitotic spindle integrity. Prevents the formation of the STIL-CPAP complex (which can induce the formation of aberrant centriolar protein complexes) by interfering with the interaction of STIL with CPAP. Plays a role in the regulation of DNA virus-mediated innate immune response by assembling into the HDP-RNP complex, a complex that serves as a platform for IRF3 phosphorylation and subsequent innate immune response activation through the cGAS-STING pathway. This Pongo abelii (Sumatran orangutan) protein is RNA-binding protein 14 (RBM14).